A 527-amino-acid chain; its full sequence is Inorganic phosphate transporter 1-1 (527 aa).

The Cytoplasmic portion of the chain corresponds to 1–21; sequence MAGGQLNVLSTLDQAKTQWYH. The chain crosses the membrane as a helical span at residues 22–42; that stretch reads FMAIVIAGMGFFTDAYDLFCI. Over 43–70 the chain is Extracellular; it reads SLVTKLLGRIYYTDDSKDTPGALPPNVS. The chain crosses the membrane as a helical span at residues 71–91; sequence AAVTGVALCGTLAGQLFFGWL. At 92–99 the chain is on the cytoplasmic side; the sequence is GDKLGRKS. Residues 100–120 form a helical membrane-spanning segment; it reads VYGFTLILMVVCSVASGLSFG. The Extracellular segment spans residues 121 to 124; sequence SSAK. Residues 125 to 145 traverse the membrane as a helical segment; that stretch reads GVVSTLCFFRFWLGFGIGGDY. Over 146-163 the chain is Cytoplasmic; it reads PLSATIMSEYANKRTRGA. Residues 164-184 form a helical membrane-spanning segment; it reads FIAAVFAMQGFGILFGAIVAL. The Extracellular portion of the chain corresponds to 185–211; the sequence is AVSAGFRHAYPAPSYSDNHAASLVPQA. A helical transmembrane segment spans residues 212–232; sequence DYVWRIILMFGTVPAALTYYW. At 233–292 the chain is on the cytoplasmic side; it reads RMKMPETARYTALIARNAKQAAADMSKVLHTQIEESADRAETVAVGGESWGLFSRQFLRR. The helical transmembrane segment at 293–313 threads the bilayer; the sequence is HGLHLLATTSTWFLLDIAFYS. The Extracellular portion of the chain corresponds to 314–348; the sequence is QNLFQKDIFSKVGWIPPAKTMNALEELYRIARAQA. A helical transmembrane segment spans residues 349-369; that stretch reads LIALCGTIPGYWFTVAFIEIM. At 370–371 the chain is on the cytoplasmic side; that stretch reads GR. Residues 372–392 form a helical membrane-spanning segment; the sequence is FWIQIMGFAMMTAFMLGLAIP. Over 393-405 the chain is Extracellular; the sequence is YHHWTTPGHHTGF. A helical transmembrane segment spans residues 406–426; sequence IVMYGFTFFFANFGPNSTTFI. Topologically, residues 427 to 442 are cytoplasmic; that stretch reads VPAEIYPARLRSTCHG. The chain crosses the membrane as a helical span at residues 443–463; that stretch reads ISAAAGKAGAIIGAFGFLYAA. Residues 464–481 are Extracellular-facing; that stretch reads QDQHKPEPGYPRGIGIKN. The chain crosses the membrane as a helical span at residues 482-502; the sequence is ALFVLAGTNFLGTIMTLLVPE. At 503–527 the chain is on the cytoplasmic side; it reads SKGMSLEVISQEVADGDDEEAAYPK.

Belongs to the major facilitator superfamily. Phosphate:H(+) symporter (TC 2.A.1.9) family. As to expression, expressed in roots, stems and leaves.

The protein resides in the membrane. Its function is as follows. High-affinity transporter for external inorganic phosphate. Required for phosphate acquisition in plant. This is Inorganic phosphate transporter 1-1 (PHT1-1) from Oryza sativa subsp. japonica (Rice).